The chain runs to 202 residues: Dephospho-CoA kinase (202 aa).

Positions 6-202 (KISVTGDPSS…QCFKALKGTI (197 aa)) constitute a DPCK domain. 14-19 (SSGKTE) is an ATP binding site.

This sequence belongs to the CoaE family.

The protein resides in the cytoplasm. It catalyses the reaction 3'-dephospho-CoA + ATP = ADP + CoA + H(+). It participates in cofactor biosynthesis; coenzyme A biosynthesis; CoA from (R)-pantothenate: step 5/5. In terms of biological role, catalyzes the phosphorylation of the 3'-hydroxyl group of dephosphocoenzyme A to form coenzyme A. The sequence is that of Dephospho-CoA kinase from Chlamydia muridarum (strain MoPn / Nigg).